The primary structure comprises 547 residues: Probable protein kinase UbiB (547 aa).

The Protein kinase domain maps to 121 to 501; that stretch reads EFSPDPMASA…QLRSERRWRR (381 aa). Residues 127 to 135 and Lys149 each bind ATP; that span reads MASASVAQV. The Proton acceptor role is filled by Asp284. 2 helical membrane passes run 502–522 and 523–543; these read GFIA…HAGQ and WLAD…GVML.

The protein belongs to the ABC1 family. UbiB subfamily.

It is found in the cell inner membrane. Its pathway is cofactor biosynthesis; ubiquinone biosynthesis [regulation]. Functionally, is probably a protein kinase regulator of UbiI activity which is involved in aerobic coenzyme Q (ubiquinone) biosynthesis. The chain is Probable protein kinase UbiB from Marinobacter nauticus (strain ATCC 700491 / DSM 11845 / VT8) (Marinobacter aquaeolei).